A 485-amino-acid polypeptide reads, in one-letter code: Pre-glycoprotein polyprotein GP complex (485 aa).

A lipid anchor (N-myristoyl glycine; by host) is attached at Gly-2. Topologically, residues 2-17 (GQFISFMQEIPTFLQE) are extracellular. The helical transmembrane segment at 18 to 33 (ALNIALVAVSLIAIIK) threads the bilayer. Residues 34–58 (GVVNLYKSGLFQFFVFLALAGRSCT) are Cytoplasmic-facing. Cys-57 serves as a coordination point for Zn(2+). The Extracellular portion of the chain corresponds to 59–424 (EEAFKIGLHT…QGKTPLTLVD (366 aa)). 6 cysteine pairs are disulfide-bonded: Cys-92/Cys-226, Cys-135/Cys-164, Cys-207/Cys-213, Cys-271/Cys-284, Cys-293/Cys-302, and Cys-356/Cys-377. Residues Asn-95 and Asn-105 are each glycosylated (N-linked (GlcNAc...) asparagine; by host). N-linked (GlcNAc...) asparagine; by host glycosylation is found at Asn-166 and Asn-178. Positions 250–286 (LKAFFSWSLTDSSGKDTPGGYCLEEWMLVAAKMKCFG) are fusion. Residues 287–355 (NTAVAKCNLN…KIRELMSVPY (69 aa)) are HR1. 4 N-linked (GlcNAc...) asparagine; by host glycosylation sites follow: Asn-357, Asn-365, Asn-382, and Asn-387. The segment at 360-423 (KFWYVNHTLS…RQGKTPLTLV (64 aa)) is HR2. Residues 425–445 (ICFWSTVFFTASLFLHLVGIP) traverse the membrane as a helical segment. The Cytoplasmic portion of the chain corresponds to 446 to 485 (THRHIRGEACPLPHRLNSLGGCRCGKYPNLKKPTVWRRGH). His-447, His-449, Cys-455, His-459, Cys-467, Cys-469, and His-485 together coordinate Zn(2+).

It belongs to the arenaviridae GPC protein family. Interacts with glycoprotein G2. Part of the GP complex (GP-C) together with glycoprotein G1 and glycoprotein G2. The GP-complex interacts with protein Z, which interacts with ribonucleocapsid; these interactions may induce virion budding. In terms of assembly, homotrimer; disulfide-linked. In pre-fusion state, G1 homotrimers bind G2 homotrimers via ionic interactions. Part of the GP complex (GP-C) together with glycoprotein G2 and the stable signal peptide. Interacts with host TFRC. The GP-complex interacts with protein Z, which interacts with ribonucleocapsid; these interactions may induce virion budding. As to quaternary structure, homotrimer. Interacts with the stable signal peptide. In pre-fusion state, G2 homotrimers bind G1 homotrimers via ionic interactions. Part of the GP complex (GP-C) together with glycoprotein G1 and the stable signal peptide. Acidification in the endosome triggers rearrangements, which ultimately leads to a 6 helix bundle formed by the two heptad repeat domains (HR1 and HR2) in post-fusion state. The GP-complex interacts with protein Z, which interacts with ribonucleocapsid; these interactions may induce virion budding. In terms of processing, specific enzymatic cleavages in vivo yield mature proteins. GP-C polyprotein is cleaved in the endoplasmic reticulum by the host protease MBTPS1. Only cleaved glycoprotein is incorporated into virions. Post-translationally, the SSP remains stably associated with the GP complex following cleavage by signal peptidase and plays crucial roles in the trafficking of GP through the secretory pathway. Myristoylation is necessary for GP2-mediated fusion activity.

It is found in the virion membrane. The protein resides in the host endoplasmic reticulum membrane. It localises to the host Golgi apparatus membrane. The protein localises to the host cell membrane. Functionally, functions as a cleaved signal peptide that is retained as the third component of the GP complex (GP-C). Helps to stabilize the spike complex in its native conformation. The SSP is required for efficient glycoprotein expression, post-translational maturation cleavage of G1 and G2, glycoprotein transport to the cell surface plasma membrane, formation of infectious virus particles, and acid pH-dependent glycoprotein-mediated cell fusion. Forms the virion spikes together with glycoprotein G2. The glycoprotein spike trimers are connected to the underlying matrix. Mediates virus attachment to host TFRC. This attachment induces virion internalization predominantly through clathrin-mediated endocytosis. In terms of biological role, forms the virion spikes together with glycoprotein G1. The glycoprotein spike trimers are connected to the underlying matrix. Class I viral fusion protein that directs fusion of viral and host endosomal membranes, leading to delivery of the nucleocapsid into the cytoplasm. Membrane fusion is mediated by irreversible conformational changes induced by acidification. The chain is Pre-glycoprotein polyprotein GP complex from Junin mammarenavirus (JUNV).